The sequence spans 214 residues: ATP synthase subunit a (214 aa).

Transmembrane regions (helical) follow at residues 9 to 29, 64 to 84, 88 to 108, 121 to 141, 150 to 170, and 182 to 202; these read LDGMTSLWSWLTPMFLSVFMI, IMMVLIIFNNLLGMAPFTYGI, LWVNMTLALLLWGLILLSGYI, SGAPLLLLPFLILIESISIMI, LVANMSAGHIILALMASVLSS, and LIMVGYYLFEFFVCFIQAYIF.

It belongs to the ATPase A chain family. As to quaternary structure, F-type ATPases have 2 components, CF(1) - the catalytic core - and CF(0) - the membrane proton channel. CF(1) has five subunits: alpha(3), beta(3), gamma(1), delta(1), epsilon(1). CF(0) has three main subunits: a, b and c.

The protein localises to the mitochondrion inner membrane. Mitochondrial membrane ATP synthase (F(1)F(0) ATP synthase or Complex V) produces ATP from ADP in the presence of a proton gradient across the membrane which is generated by electron transport complexes of the respiratory chain. F-type ATPases consist of two structural domains, F(1) - containing the extramembraneous catalytic core and F(0) - containing the membrane proton channel, linked together by a central stalk and a peripheral stalk. During catalysis, ATP synthesis in the catalytic domain of F(1) is coupled via a rotary mechanism of the central stalk subunits to proton translocation. Key component of the proton channel; it may play a direct role in the translocation of protons across the membrane. In Albinaria caerulea (Land snail), this protein is ATP synthase subunit a (ATP6).